Reading from the N-terminus, the 327-residue chain is RNA ligase 1 (327 aa).

It depends on Mg(2+) as a cofactor. The cofactor is Mn(2+). Post-translationally, AMPylates itself (auto-AMPylation).

The enzyme catalyses ATP + (ribonucleotide)n-3'-hydroxyl + 5'-phospho-(ribonucleotide)m = (ribonucleotide)n+m + AMP + diphosphate.. Functionally, functions as an RNA ligase, in vitro. The ligation reaction entails three nucleotidyl transfer steps. In the first step, the RNA ligase reacts with ATP in the absence of nucleic acid to form a covalent ligase-AMP intermediate and release pyrophosphate. In step 2, the ligase-AMP binds to the nucleic acid and transfers the adenylate to the 5'-PO4 terminus to form an adenylylated intermediate. In step 3, the RNA ligase directs the attack of the 3'-OH on the 5'-phosphoanhydride linkage, resulting in a repaired 3'-5' phosphodiester and release of AMP. Exhibits selectivity for single-stranded RNA substrates and may not have nick-sealing activity on double-stranded DNA-RNA hybrids. May play a role in maintaining RNA integrity under stress conditions, for example in response to reactive oxygen species (ROS). The protein is RNA ligase 1 of Mus musculus (Mouse).